We begin with the raw amino-acid sequence, 668 residues long: Neurexin-3-beta (668 aa).

The first 35 residues, 1-35 (MHLRTNPSICPGRRPAWTLWMCSLFWGCIVSSVWS), serve as a signal peptide directing secretion. Residues 36–593 (SSNVASSASS…EVVRESSSTT (558 aa)) are Extracellular-facing. Positions 84-284 (ATYIFGKSGG…NPNIKINGSV (201 aa)) constitute a Laminin G-like domain. The interval 510-529 (TASSSTGMVPKLPAGKMNNR) is disordered. A helical membrane pass occupies residues 594-614 (GMVVGIVAAAALCILILLYAM). Topologically, residues 615–668 (YKYRNRDEGSYQVDETRNYISNSAQSNGTLMKEKQQSSKSGHKKQKNKDKEYYV) are cytoplasmic. Positions 636 to 668 (NSAQSNGTLMKEKQQSSKSGHKKQKNKDKEYYV) are disordered.

The protein belongs to the neurexin family. In terms of processing, processed by alpha-secretase leading to the formation of an extracellular soluble protein as well as a C-terminal membrane-embedded fragment (CTF). Proteolysis of these CTFs by gamma-secretase releases intracellular domains (ICDs) and extracellular peptides. As to expression, brain and arteries (at protein level).

It is found in the membrane. Its function is as follows. Neuronal cell surface protein that may be involved in cell recognition and cell adhesion. Plays a role in angiogenesis. This is Neurexin-3-beta (NRXN3) from Gallus gallus (Chicken).